A 179-amino-acid chain; its full sequence is MSTGSLSDVEDFQDMEMLECDGIKLDPNKEFGISNDSNEESSTCDNGSPKKGRGTSGKRRKASSKKSPLGTINQEGKQVQRNAANARERARMRVLSKAFSRLKTTLPWVPPDTKLSKLDTLRLASSYIAHLRQILANDKYENGYIHPVNLTWPFMVAGKPENDLKEVVSTSRLCGPTAS.

Positions 20–86 are disordered; it reads CDGIKLDPNK…KQVQRNAANA (67 aa). Polar residues predominate over residues 34–46; that stretch reads SNDSNEESSTCDN. Residues 50-64 show a composition bias toward basic residues; that stretch reads KKGRGTSGKRRKASS. Residues 70 to 80 are compositionally biased toward polar residues; the sequence is GTINQEGKQVQ. In terms of domain architecture, bHLH spans 79–131; sequence VQRNAANARERARMRVLSKAFSRLKTTLPWVPPDTKLSKLDTLRLASSYIAHL.

In terms of assembly, efficient DNA binding requires dimerization with another bHLH protein. In terms of tissue distribution, at the start of neurulation (stage 13), expressed in the pronephros. At tailbud stage (stage 25-28), expression is high in the anterior-most branchial arch and pronephric glomus. At stage 40, staining persists in the glomus and in the epicardium region of the heart, and at stage 42, expression is higher in the glomus than in the kidney tubule or duct. In adults, expression is highest in the rectum and the spleen, with significant expression in the duodenum, heart, kidney, lungs, pancreas, skin, liver and muscle.

The protein localises to the nucleus. Its function is as follows. Involved in epithelial-mesenchymal interactions in kidney and lung morphogenesis that include epithelial differentiation and branching morphogenesis. The protein is Transcription factor 21 (tcf21) of Xenopus laevis (African clawed frog).